Here is a 384-residue protein sequence, read N- to C-terminus: Chaperone protein DnaJ (384 aa).

Positions 5–70 (DYYEILGVTR…QKKRIYDTYG (66 aa)) constitute a J domain. A CR-type zinc finger spans residues 134–212 (GTEKEIRLQT…CNGQGRTRQS (79 aa)). Zn(2+) contacts are provided by Cys147, Cys150, Cys164, Cys167, Cys186, Cys189, Cys200, and Cys203. CXXCXGXG motif repeat units follow at residues 147-154 (CEECNGSG), 164-171 (CPVCQGSG), 186-193 (CTRCQGMG), and 200-207 (CKTCNGQG). The tract at residues 352 to 384 (KEKSGEKVRKWPWSKRKDREKKSMAESTREART) is disordered.

It belongs to the DnaJ family. As to quaternary structure, homodimer. It depends on Zn(2+) as a cofactor.

The protein localises to the cytoplasm. Functionally, participates actively in the response to hyperosmotic and heat shock by preventing the aggregation of stress-denatured proteins and by disaggregating proteins, also in an autonomous, DnaK-independent fashion. Unfolded proteins bind initially to DnaJ; upon interaction with the DnaJ-bound protein, DnaK hydrolyzes its bound ATP, resulting in the formation of a stable complex. GrpE releases ADP from DnaK; ATP binding to DnaK triggers the release of the substrate protein, thus completing the reaction cycle. Several rounds of ATP-dependent interactions between DnaJ, DnaK and GrpE are required for fully efficient folding. Also involved, together with DnaK and GrpE, in the DNA replication of plasmids through activation of initiation proteins. In Syntrophobacter fumaroxidans (strain DSM 10017 / MPOB), this protein is Chaperone protein DnaJ.